The following is a 266-amino-acid chain: ATG8-interacting protein 2 (266 aa).

An AIM (Atg8-family-interacting motif) motif is present at residues 14-17 (WEVV). The chain crosses the membrane as a helical span at residues 191 to 210 (TNTVWSICIAAAVMGIVILG). The short motif at 218 to 221 (WQIL) is the AIM (Atg8-family-interacting motif) element.

In terms of assembly, interacts with ATG8F.

The protein resides in the endoplasmic reticulum membrane. It is found in the membrane. Functionally, may be involved in salt stress-induced vesicle-to-vacuole trafficking pathway. Through its interaction with ATG8F, may enable delivery of the vesicle bodies to the vacuole by an autophagic pathway. Plays a role in seed germination in response to exogenous abscisic acid (ABA) treatment. The protein is ATG8-interacting protein 2 of Arabidopsis thaliana (Mouse-ear cress).